The primary structure comprises 366 residues: Tubulin-like protein CetZ (366 aa).

GTP contacts are provided by residues 10–14 (QCGTK), 103–105 (GTG), Glu136, Asn163, and Asn181.

The protein belongs to the CetZ family.

Its subcellular location is the cytoplasm. Its function is as follows. Involved in cell shape control. The protein is Tubulin-like protein CetZ of Pyrococcus furiosus (strain ATCC 43587 / DSM 3638 / JCM 8422 / Vc1).